Consider the following 156-residue polypeptide: Protein-export protein SecB (156 aa).

Belongs to the SecB family. As to quaternary structure, homotetramer, a dimer of dimers. One homotetramer interacts with 1 SecA dimer.

It localises to the cytoplasm. One of the proteins required for the normal export of preproteins out of the cell cytoplasm. It is a molecular chaperone that binds to a subset of precursor proteins, maintaining them in a translocation-competent state. It also specifically binds to its receptor SecA. The polypeptide is Protein-export protein SecB (Desulfotalea psychrophila (strain LSv54 / DSM 12343)).